The sequence spans 320 residues: GTP 3',8-cyclase (320 aa).

The 221-residue stretch at 5–225 (QFGRKINYLR…IQLIKKDEKA (221 aa)) folds into the Radical SAM core domain. Residue Arg14 participates in GTP binding. 2 residues coordinate [4Fe-4S] cluster: Cys21 and Cys25. Residue Tyr27 coordinates S-adenosyl-L-methionine. A [4Fe-4S] cluster-binding site is contributed by Cys28. Arg64 serves as a coordination point for GTP. Gly68 contacts S-adenosyl-L-methionine. Thr95 lines the GTP pocket. Ser119 serves as a coordination point for S-adenosyl-L-methionine. Lys155 is a binding site for GTP. Met189 lines the S-adenosyl-L-methionine pocket. The [4Fe-4S] cluster site is built by Cys248 and Cys251. A GTP-binding site is contributed by 253–255 (RIR). Cys265 lines the [4Fe-4S] cluster pocket.

This sequence belongs to the radical SAM superfamily. MoaA family. As to quaternary structure, monomer and homodimer. It depends on [4Fe-4S] cluster as a cofactor.

It catalyses the reaction GTP + AH2 + S-adenosyl-L-methionine = (8S)-3',8-cyclo-7,8-dihydroguanosine 5'-triphosphate + 5'-deoxyadenosine + L-methionine + A + H(+). Its pathway is cofactor biosynthesis; molybdopterin biosynthesis. Its function is as follows. Catalyzes the cyclization of GTP to (8S)-3',8-cyclo-7,8-dihydroguanosine 5'-triphosphate. The protein is GTP 3',8-cyclase of Campylobacter jejuni subsp. jejuni serotype O:6 (strain 81116 / NCTC 11828).